The primary structure comprises 125 residues: uncharacterized protein (125 aa).

The N-terminal 46 residues, 1-46, are a transit peptide targeting the chloroplast; sequence MFFDTKVLNYPTIHKSISMASTMQRTSSSAASNERQLSQLQRRAPS.

The protein resides in the plastid. It localises to the chloroplast. This is an uncharacterized protein from Arabidopsis thaliana (Mouse-ear cress).